The chain runs to 341 residues: S-adenosylmethionine:tRNA ribosyltransferase-isomerase (341 aa).

This sequence belongs to the QueA family. In terms of assembly, monomer.

It is found in the cytoplasm. It catalyses the reaction 7-aminomethyl-7-carbaguanosine(34) in tRNA + S-adenosyl-L-methionine = epoxyqueuosine(34) in tRNA + adenine + L-methionine + 2 H(+). The protein operates within tRNA modification; tRNA-queuosine biosynthesis. In terms of biological role, transfers and isomerizes the ribose moiety from AdoMet to the 7-aminomethyl group of 7-deazaguanine (preQ1-tRNA) to give epoxyqueuosine (oQ-tRNA). In Staphylococcus aureus (strain Mu3 / ATCC 700698), this protein is S-adenosylmethionine:tRNA ribosyltransferase-isomerase.